Consider the following 24-residue polypeptide: Small ribosomal subunit protein uS5 (24 aa).

Belongs to the universal ribosomal protein uS5 family. As to quaternary structure, part of the 30S ribosomal subunit. Contacts proteins S4 and S8.

Its function is as follows. With S4 and S12 plays an important role in translational accuracy. Located at the back of the 30S subunit body where it stabilizes the conformation of the head with respect to the body. This is Small ribosomal subunit protein uS5 (rpsE) from Vibrio proteolyticus (Aeromonas proteolytica).